A 393-amino-acid polypeptide reads, in one-letter code: Small RNA 2'-O-methyltransferase (393 aa).

3 residues coordinate S-adenosyl-L-methionine: Ser60, Asp78, and Ser114. Mg(2+)-binding residues include Glu132, Glu135, His136, and His181. Positions 283 to 309 (RVSHLPRRKEQDGEQGDKPKDIGGSKA) are disordered. Residues 290–305 (RKEQDGEQGDKPKDIG) show a composition bias toward basic and acidic residues.

Belongs to the methyltransferase superfamily. HEN1 family. The cofactor is Mg(2+).

It is found in the cytoplasm. The catalysed reaction is small RNA 3'-end nucleotide + S-adenosyl-L-methionine = small RNA 3'-end 2'-O-methylnucleotide + S-adenosyl-L-homocysteine + H(+). In terms of biological role, methyltransferase that adds a 2'-O-methyl group at the 3'-end of piRNAs, a class of 24 to 30 nucleotide RNAs that are generated by a Dicer-independent mechanism and are primarily derived from transposons and other repeated sequence elements. This probably protects the 3'-end of piRNAs from uridylation activity and subsequent degradation. Stabilization of piRNAs is essential for gametogenesis. The protein is Small RNA 2'-O-methyltransferase (HENMT1) of Macaca fascicularis (Crab-eating macaque).